We begin with the raw amino-acid sequence, 476 residues long: Adenosylhomocysteinase (476 aa).

Substrate contacts are provided by Thr-61, Asp-140, and Glu-200. Residue Thr-201–Thr-203 coordinates NAD(+). The substrate site is built by Lys-230 and Asp-234. NAD(+)-binding positions include Asn-235, Gly-264–Gly-269, Glu-287, Asn-322, Ile-343–His-345, and Asn-389.

It belongs to the adenosylhomocysteinase family. NAD(+) is required as a cofactor.

It localises to the cytoplasm. The catalysed reaction is S-adenosyl-L-homocysteine + H2O = L-homocysteine + adenosine. It participates in amino-acid biosynthesis; L-homocysteine biosynthesis; L-homocysteine from S-adenosyl-L-homocysteine: step 1/1. Functionally, may play a key role in the regulation of the intracellular concentration of adenosylhomocysteine. This Acidovorax ebreus (strain TPSY) (Diaphorobacter sp. (strain TPSY)) protein is Adenosylhomocysteinase.